The primary structure comprises 277 residues: Transcription factor WRKY19 (277 aa).

Positions 100 to 168 form a DNA-binding region, WRKY; it reads QDTASLDDGL…YLGDHTCGQA (69 aa).

The protein belongs to the WRKY group III family.

Its subcellular location is the nucleus. Its function is as follows. May play a role in defense responses. This chain is Transcription factor WRKY19, found in Oryza sativa subsp. japonica (Rice).